The sequence spans 66 residues: Large ribosomal subunit protein bL32 (66 aa).

The interval 1–20 is disordered; that stretch reads MAVPKRRKSKSKVRTKRAHH.

The protein belongs to the bacterial ribosomal protein bL32 family.

In Leptospira borgpetersenii serovar Hardjo-bovis (strain JB197), this protein is Large ribosomal subunit protein bL32.